A 349-amino-acid chain; its full sequence is Oxygen-dependent coproporphyrinogen-III oxidase (349 aa).

Disordered stretches follow at residues 1–21 (MGAS…KRAR) and 37–60 (SLDG…GRSK). Ser105 serves as a coordination point for substrate. His109 and His119 together coordinate a divalent metal cation. His119 acts as the Proton donor in catalysis. 121 to 123 (NYR) serves as a coordination point for substrate. The a divalent metal cation site is built by His153 and His183. Positions 273 to 308 (YAEFNLVWDRGTIFGLQTNGRTESILMSLPPLARWE) are important for dimerization.

This sequence belongs to the aerobic coproporphyrinogen-III oxidase family. As to quaternary structure, homodimer. A divalent metal cation is required as a cofactor.

Its subcellular location is the cytoplasm. The catalysed reaction is coproporphyrinogen III + O2 + 2 H(+) = protoporphyrinogen IX + 2 CO2 + 2 H2O. The protein operates within porphyrin-containing compound metabolism; protoporphyrin-IX biosynthesis; protoporphyrinogen-IX from coproporphyrinogen-III (O2 route): step 1/1. Functionally, involved in the heme and chlorophyll biosynthesis. Catalyzes the aerobic oxidative decarboxylation of propionate groups of rings A and B of coproporphyrinogen-III to yield the vinyl groups in protoporphyrinogen-IX. This Prochlorococcus marinus (strain MIT 9313) protein is Oxygen-dependent coproporphyrinogen-III oxidase.